A 63-amino-acid polypeptide reads, in one-letter code: Progonadoliberin-1 (63 aa).

The residue at position 1 (Q1) is a Pyrrolidone carboxylic acid. G10 carries the glycine amide modification.

This sequence belongs to the GnRH family. In terms of processing, the precursor is cleaved by ACE, which removes the Gly-Lys-Arg peptide at the C-terminus, leading to mature hormone. The mature form of Gonadoliberin-1 is also cleaved and degraded by ACE.

It is found in the secreted. In terms of biological role, stimulates the secretion of gonadotropins; it stimulates the secretion of both luteinizing and follicle-stimulating hormones. The polypeptide is Progonadoliberin-1 (GNRH1) (Mesocricetus auratus (Golden hamster)).